We begin with the raw amino-acid sequence, 413 residues long: Palmitoyltransferase ZDHHC6 (413 aa).

The Cytoplasmic segment spans residues 1–24 (MGTFCSVIKFENLQELKRLCHWGP). Residues 25–45 (IIALGVIAICSTMAMIDSVLW) form a helical membrane-spanning segment. Topologically, residues 46 to 57 (YWPLHTTGGSVN) are lumenal. The chain crosses the membrane as a helical span at residues 58–78 (FIMLINWTVMILYNYFNAMFV). Topologically, residues 79-143 (GPGFVPLGWK…NCCGYQNHAS (65 aa)) are cytoplasmic. A DHHC domain is found at 99–149 (QYCKVCQAYKAPRSHHCRKCNRCVMKMDHHCPWINNCCGYQNHASFTLFLL). C129 serves as the catalytic S-palmitoyl cysteine intermediate. The chain crosses the membrane as a helical span at residues 144 to 164 (FTLFLLLAPLGCIHAAFIFVM). Residues 165–205 (TMYTQLYHRLSFGWNTVKIDMSAARRDPLPIVPFGLAAFAT) lie on the Lumenal side of the membrane. A helical membrane pass occupies residues 206-226 (TLFALGLALGTTIAVGMLFFI). Residues 227 to 413 (QMKIILRNKT…QAPEGEKKNR (187 aa)) are Cytoplasmic-facing. The region spanning 313–398 (VRSVRYKVIE…PRKCVEKCPC (86 aa)) is the SH3 domain. Residues C328, C329, and C343 are each lipidated (S-palmitoyl cysteine). The Di-lysine motif signature appears at 410–413 (KKNR).

Belongs to the DHHC palmitoyltransferase family. Homooligomerizes. Interacts with SELENOK. Palmitoylated at 3 different sites by ZDHHC16. The combination of the different palmitoylation events strongly affects the quaternary assembly of ZDHHC6, its localization, stability and function. Palmitoylation at Cys-328 accelerates the turnover of ZDHHC6. Depalmitoylated by LYPLA2.

The protein localises to the endoplasmic reticulum membrane. The enzyme catalyses L-cysteinyl-[protein] + hexadecanoyl-CoA = S-hexadecanoyl-L-cysteinyl-[protein] + CoA. It carries out the reaction L-cysteinyl-[protein] + octadecanoyl-CoA = S-octadecanoyl-L-cysteinyl-[protein] + CoA. Its function is as follows. Endoplasmic reticulum palmitoyl acyltransferase that mediates palmitoylation of proteins such as AMFR, CALX, ITPR1 and TFRC. Palmitoylates calnexin (CALX), which is required for its association with the ribosome-translocon complex and efficient folding of glycosylated proteins. Mediates palmitoylation of AMFR, promoting AMFR distribution to the peripheral endoplasmic reticulum. Together with SELENOK, palmitoylates ITPR1 in immune cells, leading to regulate ITPR1 stability and function. Stearoyltransferase that mediates stearoylation of TFRC to inhibit TFRC-mediated activation of the JNK pathway and mitochondrial fragmentation. The protein is Palmitoyltransferase ZDHHC6 of Homo sapiens (Human).